Consider the following 325-residue polypeptide: Glycerol-3-phosphate dehydrogenase [NAD(P)+] (325 aa).

Positions 14, 15, 35, and 109 each coordinate NADPH. Positions 109 and 137 each coordinate sn-glycerol 3-phosphate. Position 141 (alanine 141) interacts with NADPH. Lysine 192, aspartate 247, serine 257, arginine 258, and asparagine 259 together coordinate sn-glycerol 3-phosphate. The active-site Proton acceptor is the lysine 192. Arginine 258 is a binding site for NADPH. NADPH-binding residues include leucine 282 and glutamate 284.

It belongs to the NAD-dependent glycerol-3-phosphate dehydrogenase family.

The protein resides in the cytoplasm. It catalyses the reaction sn-glycerol 3-phosphate + NAD(+) = dihydroxyacetone phosphate + NADH + H(+). The enzyme catalyses sn-glycerol 3-phosphate + NADP(+) = dihydroxyacetone phosphate + NADPH + H(+). The protein operates within membrane lipid metabolism; glycerophospholipid metabolism. In terms of biological role, catalyzes the reduction of the glycolytic intermediate dihydroxyacetone phosphate (DHAP) to sn-glycerol 3-phosphate (G3P), the key precursor for phospholipid synthesis. The protein is Glycerol-3-phosphate dehydrogenase [NAD(P)+] of Rickettsia africae (strain ESF-5).